Consider the following 443-residue polypeptide: MQNELAQTIPELISWTKEREFSLSLPSDRLAFLLVISIYNNEQTDGELLESDLIDLFRYVSNVFEQSEASLLQRANNAINDLVKQRFLNRFSSEFTEGLAIYRVTPLGVGVSDYYVRQREFSSLRLSIQLSIVADEIQRASVAAEQGGDERYWRNNVFAPLKFSVAEIFDSIDLSQRMMDENQHQIREQIAGLLSQNWHEAIINCQQLLDETSINLRELQDTLNAAGDKLQSQLLRIQSCLISRDDLAFVDQLIVNLQNKLDRIMSWGQQAIDLWIGYDKHVHKFIRTAIDMDKNRVFGQRLRQSIQNYFSSPWLLYTAKAEALLDLRDDEAMLNEMEAVGELPMALEYESLTDVQTQIVTAIQAELAHFRDTAQPINLGAVLREQLARYPQSRHFDVARIIVDQAVKLGMASQDHQAVYPVWQPIDDFSAAVQAHLIDQYDK.

A leucine-zipper region spans residues 209-237 (LDETSINLRELQDTLNAAGDKLQSQLLRI).

This sequence belongs to the MukF family. In terms of assembly, interacts, and probably forms a ternary complex, with MukE and MukB via its C-terminal region. The complex formation is stimulated by calcium or magnesium. It is required for an interaction between MukE and MukB.

It is found in the cytoplasm. The protein localises to the nucleoid. Its function is as follows. Involved in chromosome condensation, segregation and cell cycle progression. May participate in facilitating chromosome segregation by condensation DNA from both sides of a centrally located replisome during cell division. Not required for mini-F plasmid partitioning. Probably acts via its interaction with MukB and MukE. Overexpression results in anucleate cells. It has a calcium binding activity. The sequence is that of Chromosome partition protein MukF from Haemophilus ducreyi (strain 35000HP / ATCC 700724).